The primary structure comprises 144 residues: Maximins 11/H1 (144 aa).

The signal sequence occupies residues 1 to 18; it reads MNFKYIVAVSFLIASAYA. Residues 19–43 constitute a propeptide that is removed on maturation; that stretch reads RSEENDEQSLSQRDVLEEESLREIR. Asn70 is subject to Asparagine amide. A propeptide spanning residues 74–123 is cleaved from the precursor; that stretch reads TAEDHEVMKRLEAVMRDLDSLDYPEEASERETRGFNQEEIANLFTKKEKR. Residue Leu143 is modified to Leucine amide.

The protein belongs to the bombinin family. As to expression, expressed by the skin glands.

The protein localises to the secreted. Functionally, maximin-11 shows antimicrobial activity against bacteria and against the fungus C.albicans. It has little hemolytic activity. Maximin-H1 shows antibacterial activity against both Gram-positive and Gram-negative bacteria. It also shows antimicrobial activity against the fungus C.albicans. Shows strong hemolytic activity. In Bombina maxima (Giant fire-bellied toad), this protein is Maximins 11/H1.